The sequence spans 410 residues: MGNCGTRDEAAVFTPQAQAQQLQKKHSRSVSDLSDPSTPRFRDDSRTPISYAQVIPFTLFELETITKSFRPDYILGEGGFGTVYKGYIDDNLRVGLKSLPVAVKVLNKEGLQGHREWLTEVNFLGQLRHPNLVKLIGYCCEDDHRLLVYEFMLRGSLENHLFRKTTAPLSWSRRMMIALGAAKGLAFLHNAERPVIYRDFKTSNILLDSDYTAKLSDFGLAKAGPQGDETHVSTRVMGTYGYAAPEYVMTGHLTARSDVYSFGVVLLEMLTGRKSVDKTRPSKEQNLVDWARPKLNDKRKLLQIIDPRLENQYSVRAAQKACSLAYYCLSQNPKARPLMSDVVETLEPLQCTGDALIPCATTTAGAAFAMGGVPDYRMHRRFAKNVGPGAICRSPNPNYSPGGPAACRVR.

Basic and acidic residues predominate over residues 1 to 10 (MGNCGTRDEA). Positions 1 to 45 (MGNCGTRDEAAVFTPQAQAQQLQKKHSRSVSDLSDPSTPRFRDDS) are disordered. G2 is lipidated: N-myristoyl glycine. C4 is lipidated: S-palmitoyl cysteine. A Phosphothreonine modification is found at T58. The 282-residue stretch at 69–350 (FRPDYILGEG…DVVETLEPLQ (282 aa)) folds into the Protein kinase domain. Residues 75-83 (LGEGGFGTV) and K104 contribute to the ATP site. At Y149 the chain carries Phosphotyrosine. D199 serves as the catalytic Proton acceptor. Phosphoserine is present on residues S203 and S233. Phosphothreonine occurs at positions 234 and 239. Residue Y247 is modified to Phosphotyrosine.

This sequence belongs to the protein kinase superfamily. Ser/Thr protein kinase family. As to quaternary structure, interacts with the Xanthomonas campestris effector XopAC/AvrAC.

It is found in the cell membrane. The enzyme catalyses L-seryl-[protein] + ATP = O-phospho-L-seryl-[protein] + ADP + H(+). It catalyses the reaction L-threonyl-[protein] + ATP = O-phospho-L-threonyl-[protein] + ADP + H(+). In terms of biological role, may be involved in plant defense signaling. The protein is Probable serine/threonine-protein kinase PBL8 of Arabidopsis thaliana (Mouse-ear cress).